Reading from the N-terminus, the 477-residue chain is Solute carrier family 2, facilitated glucose transporter member 8 (477 aa).

Over 1 to 25 (MSPEDPQETQPLLRPPEARTPRGRR) the chain is Cytoplasmic. The Dileucine internalization motif motif lies at 12–13 (LL). The helical transmembrane segment at 26–46 (VFLASFAAALGPLSFGFALGY) threads the bilayer. Over 47–70 (SSPAIPSLRRTAPPALRLGDNAAS) the chain is Extracellular. A helical transmembrane segment spans residues 71 to 91 (WFGAVVTLGAAAGGILGGWLL). Residues 92 to 96 (DRAGR) are Cytoplasmic-facing. A helical membrane pass occupies residues 97–117 (KLSLLLCTVPFVTGFAVITAA). The Extracellular portion of the chain corresponds to 118–127 (RDVWMLLGGR). The helical transmembrane segment at 128-148 (LLTGLACGVASLVAPVYISEI) threads the bilayer. At 149 to 156 (AYPAVRGL) the chain is on the cytoplasmic side. A helical transmembrane segment spans residues 157-177 (LGSCVQLMVVTGILLAYVAGW). Gln162 serves as a coordination point for D-glucose. The Extracellular portion of the chain corresponds to 178–182 (VLEWR). A helical membrane pass occupies residues 183-203 (WLAVLGCVPPTLMLLLMCYMP). The Cytoplasmic portion of the chain corresponds to 204–257 (ETPRFLLTQHQYQEAMAALRFLWGSEEGWEEPPVGAEHQGFQLALLRRPGIYKP). A helical transmembrane segment spans residues 258-278 (LIIGISLMVFQQLSGVNAIMF). Residues 268–269 (QQ) and Asn274 each bind D-glucose. The Extracellular segment spans residues 279 to 293 (YANSIFEEAKFKDSS). A helical membrane pass occupies residues 294-314 (LASVTVGIIQVLFTAVAALIM). The Cytoplasmic segment spans residues 315 to 320 (DRAGRR). Residues 321–341 (LLLALSGVIMVFSMSAFGTYF) form a helical membrane-spanning segment. The Extracellular portion of the chain corresponds to 342–367 (KLTQSLPSNSSHVGLVPIAAEPVDVQ). An N-linked (GlcNAc...) asparagine glycan is attached at Asn350. Residues 368–388 (VGLAWLAVGSMCLFIAGFAVG) form a helical membrane-spanning segment. At 389–404 (WGPIPWLLMSEIFPLH) the chain is on the cytoplasmic side. Trp394 lines the D-glucose pocket. Residues 405–425 (VKGVATGICVLTNWFMAFLVT) form a helical membrane-spanning segment. Over 426–438 (KEFSSVMEMLRPY) the chain is Extracellular. Residues 439 to 459 (GAFWLTAAFCALSVLFTLTVV) traverse the membrane as a helical segment. Residues 460-477 (PETKGRTLEQVTAHFEGR) are Cytoplasmic-facing.

It belongs to the major facilitator superfamily. Sugar transporter (TC 2.A.1.1) family. Glucose transporter subfamily. Interacts with AP2B1. Also able to mediate the transport of dehydroascorbate. Highest level of expression in placenta and testis. Highly expressed in adult and pubertal testis, but not prepubertal testis. Lower levels of expression in brain, liver, heart, kidney, fat and skeletal muscle.

It localises to the cell membrane. It is found in the cytoplasmic vesicle membrane. It carries out the reaction D-glucose(out) = D-glucose(in). The enzyme catalyses D-fructose(out) = D-fructose(in). The catalysed reaction is L-dehydroascorbate(out) = L-dehydroascorbate(in). It catalyses the reaction alpha,alpha-trehalose(in) = alpha,alpha-trehalose(out). Its activity is regulated as follows. Inhibited by cytochalasin B. Functionally, insulin-regulated facilitative hexose transporter that mediates the transport of glucose and fructose. Facilitates hepatic influx of dietary trehalose, which in turn inhibits glucose and fructose influx triggering a starvation signal and hepatic autophagy through activation of AMPK and ULK1. Also able to mediate the transport of dehydroascorbate. The polypeptide is Solute carrier family 2, facilitated glucose transporter member 8 (Mus musculus (Mouse)).